We begin with the raw amino-acid sequence, 150 residues long: MQVILLDKIGNLGSLGDQVNVKSGYARNFLIPQGKVVMATKANVEMFETRRAELEAKVAEQRAASEARAEKLSALDAVVIASKAGDEGKLFGSIGTRDIADAITAAGEAVVKSEVRLPEGALRNIGEYEVSIQLNSDVFAKVNLTIVAAE.

Belongs to the bacterial ribosomal protein bL9 family.

Binds to the 23S rRNA. The polypeptide is Large ribosomal subunit protein bL9 (Photobacterium profundum (strain SS9)).